The sequence spans 115 residues: Photosystem II reaction center Psb28 protein (115 aa).

The protein belongs to the Psb28 family. In terms of assembly, part of the photosystem II complex.

The protein resides in the plastid. It is found in the chloroplast thylakoid membrane. In Trieres chinensis (Marine centric diatom), this protein is Photosystem II reaction center Psb28 protein.